A 428-amino-acid chain; its full sequence is D-amino acid dehydrogenase (428 aa).

3–17 provides a ligand contact to FAD; that stretch reads VVILGSGVVGVASAY.

This sequence belongs to the DadA oxidoreductase family. Requires FAD as cofactor.

It carries out the reaction a D-alpha-amino acid + A + H2O = a 2-oxocarboxylate + AH2 + NH4(+). It functions in the pathway amino-acid degradation; D-alanine degradation; NH(3) and pyruvate from D-alanine: step 1/1. In terms of biological role, oxidative deamination of D-amino acids. The chain is D-amino acid dehydrogenase from Burkholderia cenocepacia (strain HI2424).